We begin with the raw amino-acid sequence, 535 residues long: Methylmalonate-semialdehyde/malonate-semialdehyde dehydrogenase [acylating], mitochondrial (535 aa).

Residues 1 to 33 constitute a mitochondrion transit peptide; that stretch reads MAALLAAAAVRARILQVSSKVKSSPTWYSASSF. N6-acetyllysine; alternate is present on residues K47, K52, K55, and K76. N6-succinyllysine; alternate is present on residues K47, K52, K55, and K76. K87 is subject to N6-acetyllysine. N6-acetyllysine; alternate occurs at positions 117 and 129. 2 positions are modified to N6-succinyllysine; alternate: K117 and K129. The NAD(+) site is built by A183, F185, K209, E212, R213, and S262. A Phosphoserine modification is found at S262. The residue at position 298 (K298) is an N6-acetyllysine. C317 (nucleophile) is an active-site residue. N6-acetyllysine occurs at positions 330 and 331. 2 positions are modified to N6-acetyllysine; alternate: K364 and K376. N6-succinyllysine; alternate is present on residues K364 and K376. At S380 the chain carries Phosphoserine. N6-succinyllysine is present on K391. E417 contributes to the NAD(+) binding site. The residue at position 500 (K500) is an N6-acetyllysine. Residue K517 is modified to N6-succinyllysine.

The protein belongs to the aldehyde dehydrogenase family. As to quaternary structure, homotetramer.

It is found in the mitochondrion. It carries out the reaction 3-oxopropanoate + NAD(+) + CoA + H2O = hydrogencarbonate + acetyl-CoA + NADH + H(+). The catalysed reaction is 2-methyl-3-oxopropanoate + NAD(+) + CoA + H2O = propanoyl-CoA + hydrogencarbonate + NADH + H(+). It catalyses the reaction (R)-2-methyl-3-oxopropanoate + NAD(+) + CoA + H2O = propanoyl-CoA + hydrogencarbonate + NADH + H(+). The enzyme catalyses (S)-2-methyl-3-oxopropanoate + NAD(+) + CoA + H2O = propanoyl-CoA + hydrogencarbonate + NADH + H(+). In terms of biological role, malonate and methylmalonate semialdehyde dehydrogenase involved in the catabolism of valine, thymine, and compounds catabolized by way of beta-alanine, including uracil and cytidine. In Homo sapiens (Human), this protein is Methylmalonate-semialdehyde/malonate-semialdehyde dehydrogenase [acylating], mitochondrial.